A 542-amino-acid polypeptide reads, in one-letter code: Quinidine resistance protein 2 (542 aa).

Topologically, residues 1-67 (MAGATSSIIR…SFKTVLIAQC (67 aa)) are cytoplasmic. Phosphoserine is present on serine 21. The residue at position 38 (threonine 38) is a Phosphothreonine. Serine 40 is subject to Phosphoserine. Residues 68-88 (AFTGFFSTIAGAIYYPVLSVI) traverse the membrane as a helical segment. Topologically, residues 89 to 100 (ERKFDIDEELVN) are extracellular. The helical transmembrane segment at 101 to 121 (VTVVVYFVFQGLAPTFMGGFA) threads the bilayer. Over 122–127 (DSLGRR) the chain is Cytoplasmic. Residues 128-148 (PVVLVAIVIYFGACIGLACAQ) traverse the membrane as a helical segment. A topological domain (extracellular) is located at residue threonine 149. Residues 150-170 (YAQIIVLRCLQAAGISPVIAI) traverse the membrane as a helical segment. The Cytoplasmic portion of the chain corresponds to 171–187 (NSGIMGDVTTRAERGGY). The helical transmembrane segment at 188-208 (VGYVAGFQVLGSAFGALIGAG) threads the bilayer. The Extracellular portion of the chain corresponds to 209–216 (LSSRWGWR). A helical transmembrane segment spans residues 217 to 237 (AIFWFLAIGSGICFLASFLIL). Residues 238-300 (PETKRNISGN…APFKILKAYE (63 aa)) lie on the Cytoplasmic side of the membrane. A helical membrane pass occupies residues 301 to 321 (ICILMLVAGLQFAMYTTHLTA). Topologically, residues 322–333 (LSTALSKQYHLT) are extracellular. The chain crosses the membrane as a helical span at residues 334–354 (VAKVGLCYLPSGICTLCSIVI). Residues 355 to 413 (AGRYLNWNYRRRLKYYQNWLGKKRSKLLEEHDNDLNLVQRIIENDPKYTFNIFKARLQP) are Cytoplasmic-facing. A helical transmembrane segment spans residues 414-434 (AFVTLLLSSSGFCAYGWCITV). Over 435-437 (KAP) the chain is Extracellular. Residues 438-458 (LAAVLCMSGFASLFSNCILTF) traverse the membrane as a helical segment. Residues 459-472 (STTLIVDLFPTKTS) lie on the Cytoplasmic side of the membrane. A helical transmembrane segment spans residues 473-493 (TATGCLNLFRCILSAVFIAAL). Topologically, residues 494-503 (SKMVEKMKFG) are extracellular. A helical membrane pass occupies residues 504–524 (GVFTFLGALTSSSSILLFILL). Residues 525-542 (RKGKELAFKRKKQELGVN) are Cytoplasmic-facing.

Belongs to the major facilitator superfamily. CAR1 family.

The protein localises to the cell membrane. In terms of biological role, multidrug resistance transporter involved in resistance and adaptation to quinidine and to the herbicide barban (4-chloro-2-butynyl [3-chlorophenyl] carbamate). Implicated in potassium uptake. The chain is Quinidine resistance protein 2 (QDR2) from Saccharomyces cerevisiae (strain ATCC 204508 / S288c) (Baker's yeast).